We begin with the raw amino-acid sequence, 325 residues long: Bifunctional ligase/repressor BirA (325 aa).

The segment at residues 23 to 42 (GQKISDALGCSRTAVWKHIE) is a DNA-binding region (H-T-H motif). Positions 74 to 262 (RFGLKTEVMG…CFEKRYRDYM (189 aa)) constitute a BPL/LPL catalytic domain. Biotin-binding positions include Q118, 122–124 (RGR), and K189.

The protein belongs to the biotin--protein ligase family.

It catalyses the reaction biotin + L-lysyl-[protein] + ATP = N(6)-biotinyl-L-lysyl-[protein] + AMP + diphosphate + H(+). Its function is as follows. Acts both as a biotin--[acetyl-CoA-carboxylase] ligase and a repressor. The polypeptide is Bifunctional ligase/repressor BirA (Bacillus subtilis (strain 168)).